The following is a 181-amino-acid chain: Protein Syd (181 aa).

The protein belongs to the Syd family.

It localises to the cell inner membrane. Its function is as follows. Interacts with the SecY protein in vivo. May bind preferentially to an uncomplexed state of SecY, thus functioning either as a chelating agent for excess SecY in the cell or as a regulatory factor that negatively controls the translocase function. In Shigella flexneri, this protein is Protein Syd.